The following is a 137-amino-acid chain: Ribonuclease VapC27 (137 aa).

Residues V7–T125 form the PINc domain. Mg(2+) is bound by residues D8 and D101.

It belongs to the PINc/VapC protein family. Interacts with cognate antitoxin VapB27. It depends on Mg(2+) as a cofactor.

Its subcellular location is the secreted. Functionally, probably the toxic component of a type II toxin-antitoxin (TA) system. An RNase. Its cognate antitoxin is VapB27. The sequence is that of Ribonuclease VapC27 from Mycobacterium tuberculosis (strain ATCC 25618 / H37Rv).